Reading from the N-terminus, the 391-residue chain is MSLNPRDVVIVDFGRTPMGRSKGGMHRNTRAEDMSAHLISKLLERNGKVDPKEVEDVIWGCVNQTLEQGWNIARMASLMTQIPHTSAAQTVSRLCGSSMSALHTAAQAIMTGNGDVFVVGGVEHMGHVSMMHGVDPNPHLSLHAAKASGMMGLTAEMLGKMHGITREQQDLFGLRSHQLAHKATVEGKFKDEIIPMQGYDENGFLKVFDFDETIRPETTLEGLASLKPAFNPKGGTVTAGTSSQITDGASCMIVMSGQRAMDLGIQPLAVIRSMAVAGVDPAIMGYGPVPSTQKALKRAGLTMADIDFIELNEAFAAQALPVLKDLKVLDKMDEKVNLHGGAIALGHPFGCSGARISGTLLNVMKQNGGTLGVATMCVGLGQGITTVFERV.

Catalysis depends on cysteine 95, which acts as the Acyl-thioester intermediate. Catalysis depends on proton acceptor residues histidine 347 and cysteine 377.

The protein belongs to the thiolase-like superfamily. Thiolase family. As to quaternary structure, heterotetramer of two alpha chains (FadB) and two beta chains (FadA).

The protein localises to the cytoplasm. It carries out the reaction an acyl-CoA + acetyl-CoA = a 3-oxoacyl-CoA + CoA. It functions in the pathway lipid metabolism; fatty acid beta-oxidation. In terms of biological role, catalyzes the final step of fatty acid oxidation in which acetyl-CoA is released and the CoA ester of a fatty acid two carbons shorter is formed. This is 3-ketoacyl-CoA thiolase from Pseudomonas putida (strain ATCC 700007 / DSM 6899 / JCM 31910 / BCRC 17059 / LMG 24140 / F1).